A 597-amino-acid chain; its full sequence is Inactive metallocarboxypeptidase ECM14 (597 aa).

The signal sequence occupies residues 1 to 21; it reads MRLFTHGQVLALLAFVNTISA. The propeptide occupies 22–174; that stretch reads TPSFSTNSYP…QTIYESYPSP (153 aa). Residues 170–179 show a composition bias toward low complexity; sequence SYPSPSQSPS. Residues 170–189 are disordered; it reads SYPSPSQSPSGRERGFLPSG. The region spanning 202–522 is the Peptidase M14 domain; the sequence is NYQPLSVIVP…NAVMMLGRFL (321 aa). Zn(2+)-binding residues include His-264 and Glu-267. Substrate-binding positions include 264–267, Arg-322, and 339–340; these read HARE and DR. A disulfide bridge connects residues Cys-333 and Cys-356. Asn-349 carries an N-linked (GlcNAc...) asparagine glycan. His-396 provides a ligand contact to Zn(2+). 397 to 398 contributes to the substrate binding site; sequence SY. The interval 543–597 is disordered; sequence KDDKPILNDDDDDDADTNDDGIGRKDDSWIPDEYKGDNDRDESDGGWAFRRLRKR. Positions 550 to 561 are enriched in acidic residues; it reads NDDDDDDADTND. Positions 563 to 580 are enriched in basic and acidic residues; the sequence is GIGRKDDSWIPDEYKGDN.

The protein belongs to the peptidase M14 family. Requires Zn(2+) as cofactor.

The protein localises to the vacuole. It is found in the secreted. Its function is as follows. Inactive carboxypeptidase that may play a role in cell wall organization and biogenesis. In Ajellomyces capsulatus (strain G186AR / H82 / ATCC MYA-2454 / RMSCC 2432) (Darling's disease fungus), this protein is Inactive metallocarboxypeptidase ECM14 (ECM14).